The primary structure comprises 375 residues: Trichodiene synthase (375 aa).

This sequence belongs to the trichodiene synthase family.

It carries out the reaction (2E,6E)-farnesyl diphosphate = trichodiene + diphosphate. It participates in sesquiterpene biosynthesis; trichothecene biosynthesis. Functionally, TS is a member of the terpene cyclase group of enzymes. It catalyzes the isomerization and cyclization of farnesyl pyro-phosphate to form trichodiene, the first cyclic intermediate in the biosynthetic pathway for trichothecenes. It serves to branch trichothecene biosynthesis from the isoprenoid pathway. The chain is Trichodiene synthase (TRI5) from Fusarium cerealis (Fusarium crookwellense).